Reading from the N-terminus, the 585-residue chain is 3-hydroxy-3-methylglutaryl-coenzyme A reductase 1 (585 aa).

Transmembrane regions (helical) follow at residues 38–58 (LYLT…FLLC) and 77–97 (EIVA…FFGI). The tract at residues 98 to 169 (DFVQSLVLRP…DEMPVTVMTE (72 aa)) is linker. Residues 170–585 (EDEEIIRSVV…SSKDVSKVSS (416 aa)) form a catalytic region. The active-site Charge relay system is the Glu-264. The N-linked (GlcNAc...) asparagine glycan is linked to Asn-328. Residue Lys-396 is the Charge relay system of the active site. Asn-441 carries N-linked (GlcNAc...) asparagine glycosylation. Asp-472 serves as the catalytic Charge relay system. His-570 acts as the Proton donor in catalysis. Residue Asn-574 is glycosylated (N-linked (GlcNAc...) asparagine).

It belongs to the HMG-CoA reductase family.

It is found in the endoplasmic reticulum membrane. It localises to the mitochondrion membrane. The protein localises to the plastid membrane. It carries out the reaction (R)-mevalonate + 2 NADP(+) + CoA = (3S)-3-hydroxy-3-methylglutaryl-CoA + 2 NADPH + 2 H(+). It functions in the pathway metabolic intermediate biosynthesis; (R)-mevalonate biosynthesis; (R)-mevalonate from acetyl-CoA: step 3/3. Functionally, catalyzes the synthesis of mevalonate. The specific precursor of all isoprenoid compounds present in plants. The chain is 3-hydroxy-3-methylglutaryl-coenzyme A reductase 1 (HMG1) from Gossypium hirsutum (Upland cotton).